The following is a 1236-amino-acid chain: MEEKSSKKNDGGNQKVSFFKLFSFADKTDVVLMTVGTIAAAGNGLTQPFMTLIFGQLINAFGTTDPDHMVREVWKVAVKFIYLAVYSCVVAFLQVSCWMVTGERQSATIRGLYLKTILRQDIGYFDTETNTGEVIGRMSGDTILIQDAMGEKVGKFTQLLCTFLGGFAIAFYKGPLLAGVLCSCIPLIVIAGAAMSLIMSKMAGRGQVAYAEAGNVVEQTVGAIRTVVAFTGEKQATEKYESKLEIAYKTVVQQGLISGFGLGTMLAVIFCSYGLAVWYGAKLIMEKGYNGGQVINVIFAVLTGGMSLGQTSPSLNAFAAGRAAAFKMFETIKRSPKIDAYDMSGSVLEDIRGDIELKDVYFRYPARPDVQIFAGFSLFVPNGKTVALVGQSGSGKSTVISLIERFYDPESGQVLIDNIDLKKLQLKWIRSKIGLVSQEPVLFATTIKENIAYGKEDATDQEIRTAIELANAAKFIDKLPQGLDTMVGEHGTQMSGGQKQRLAIARAILKNPKILLLDEATSALDAESERIVQDALVNLMSNRTTVVVAHRLTTIRTADVIAVVHQGKIVEKGTHDEMIQDPEGAYSQLVRLQEGSKEEATESERPETSLDVERSGSLRLSSAMRRSVSRNSSSSRHSFSLASNMFFPGVNVNQTDEMEDEENNVRHKKVSLKRLAHLNKPEIPVLVLGSIAAMVHGTVFPIFGLLLSSSINMFYEPAKILKKDSHFWALIYIALGLTNFVMIPVQNYFFGIAGGKLIKRIRSMCFDKVVHQEISWFDDTANSRSLVGDALALIVQNIATVTTGLIIAFTANWILALIVLALSPFIVIQGYAQTKFLTGFSADAKAMYEEASQVANDAVSSIRTVASFCAEEKVMDLYQQKCDGPKKNGVRLGLLSGAGFGFSFFFLYCINCVCFVSGAGLIQIGKATFGEVFKVFFALTIMAIGVSQTSAMAPDSNKAKDSAASIFDILDSTPKIDSSSDEGTTLQNVNGDIEFRHVSFRYPMRPDVQIFRDLCLTIPSGKTVALVGESGSGKSTVISMIERFYNPDSGKILIDQVEIQTFKLSWLRQQMGLVSQEPILFNETIRSNIAYGKTGGATEEEIIAAAKAANAHNFISSLPQGYDTSVGERGVQLSGGQKQRIAIARAILKDPKILLLDEATSALDAESERVVQDALDRVMVNRTTVVVAHRLTTIKNADVIAVVKNGVIAEKGRHETLMKISGGAYASLVTLHMSAN.

An ABC transmembrane type-1 1 domain is found at 33–320 (MTVGTIAAAG…TSPSLNAFAA (288 aa)). 6 helical membrane passes run 38-58 (IAAAGNGLTQPFMTLIFGQLI), 80-100 (FIYLAVYSCVVAFLQVSCWMV), 158-178 (QLLCTFLGGFAIAFYKGPLLA), 179-199 (GVLCSCIPLIVIAGAAMSLIM), 257-277 (ISGFGLGTMLAVIFCSYGLAV), and 288-308 (GYNGGQVINVIFAVLTGGMSL). An ABC transporter 1 domain is found at 355–591 (IELKDVYFRY…PEGAYSQLVR (237 aa)). Residue 390–397 (GQSGSGKS) coordinates ATP. N-linked (GlcNAc...) asparagine glycosylation is present at asparagine 542. The segment at 593 to 616 (QEGSKEEATESERPETSLDVERSG) is disordered. Positions 594–616 (EGSKEEATESERPETSLDVERSG) are enriched in basic and acidic residues. Residues asparagine 631 and asparagine 653 are each glycosylated (N-linked (GlcNAc...) asparagine). Helical transmembrane passes span 685-705 (VLVLGSIAAMVHGTVFPIFGL), 725-745 (SHFWALIYIALGLTNFVMIPV), 785-805 (SLVGDALALIVQNIATVTTGL), 806-826 (IIAFTANWILALIVLALSPFI), 902-922 (FSFFFLYCINCVCFVSGAGLI), and 927-947 (ATFGEVFKVFFALTIMAIGVS). The region spanning 686–958 (LVLGSIAAMV…TSAMAPDSNK (273 aa)) is the ABC transmembrane type-1 2 domain. The ABC transporter 2 domain occupies 993–1230 (IEFRHVSFRY…SGGAYASLVT (238 aa)). ATP is bound at residue 1028–1035 (GESGSGKS). Asparagine 1082 and asparagine 1181 each carry an N-linked (GlcNAc...) asparagine glycan.

Belongs to the ABC transporter superfamily. ABCB family. Multidrug resistance exporter (TC 3.A.1.201) subfamily.

The protein resides in the membrane. In Arabidopsis thaliana (Mouse-ear cress), this protein is ABC transporter B family member 9 (ABCB9).